The following is a 362-amino-acid chain: Molybdenum import ATP-binding protein ModC (362 aa).

An ABC transporter domain is found at 2 to 236; that stretch reads VSPIEVRLQM…LDLPLAMGDD (235 aa). Position 34 to 41 (34 to 41) interacts with ATP; the sequence is GPSGSGKT. One can recognise a Mop domain in the interval 297 to 362; sequence HSSILNRLPV…AQIKAVAVLA (66 aa).

The protein belongs to the ABC transporter superfamily. Molybdate importer (TC 3.A.1.8) family. As to quaternary structure, the complex is composed of two ATP-binding proteins (ModC), two transmembrane proteins (ModB) and a solute-binding protein (ModA).

It localises to the cell inner membrane. The catalysed reaction is molybdate(out) + ATP + H2O = molybdate(in) + ADP + phosphate + H(+). Part of the ABC transporter complex ModABC involved in molybdenum import. Responsible for energy coupling to the transport system. The polypeptide is Molybdenum import ATP-binding protein ModC (Pseudomonas syringae pv. tomato (strain ATCC BAA-871 / DC3000)).